The chain runs to 221 residues: Putative hemin import ATP-binding protein HrtA (221 aa).

Positions leucine 3–leucine 221 constitute an ABC transporter domain. Glycine 39–serine 46 contributes to the ATP binding site.

This sequence belongs to the ABC transporter superfamily. HrtA family. As to quaternary structure, the complex is composed of two ATP-binding proteins (HrtA), two transmembrane proteins (HrtB) and a solute-binding protein.

It is found in the cell membrane. Part of the ABC transporter complex hrt involved in hemin import. Responsible for energy coupling to the transport system. This Staphylococcus haemolyticus (strain JCSC1435) protein is Putative hemin import ATP-binding protein HrtA (hrtA).